The primary structure comprises 130 residues: Small ribosomal subunit protein uS9 (130 aa).

Belongs to the universal ribosomal protein uS9 family.

This chain is Small ribosomal subunit protein uS9, found in Photorhabdus laumondii subsp. laumondii (strain DSM 15139 / CIP 105565 / TT01) (Photorhabdus luminescens subsp. laumondii).